Reading from the N-terminus, the 483-residue chain is Aspartyl/glutamyl-tRNA(Asn/Gln) amidotransferase subunit B (483 aa).

This sequence belongs to the GatB/GatE family. GatB subfamily. Heterotrimer of A, B and C subunits.

The catalysed reaction is L-glutamyl-tRNA(Gln) + L-glutamine + ATP + H2O = L-glutaminyl-tRNA(Gln) + L-glutamate + ADP + phosphate + H(+). It catalyses the reaction L-aspartyl-tRNA(Asn) + L-glutamine + ATP + H2O = L-asparaginyl-tRNA(Asn) + L-glutamate + ADP + phosphate + 2 H(+). Functionally, allows the formation of correctly charged Asn-tRNA(Asn) or Gln-tRNA(Gln) through the transamidation of misacylated Asp-tRNA(Asn) or Glu-tRNA(Gln) in organisms which lack either or both of asparaginyl-tRNA or glutaminyl-tRNA synthetases. The reaction takes place in the presence of glutamine and ATP through an activated phospho-Asp-tRNA(Asn) or phospho-Glu-tRNA(Gln). The sequence is that of Aspartyl/glutamyl-tRNA(Asn/Gln) amidotransferase subunit B from Herpetosiphon aurantiacus (strain ATCC 23779 / DSM 785 / 114-95).